The following is a 230-amino-acid chain: UPF0173 metal-dependent hydrolase MK1542 (230 aa).

This sequence belongs to the UPF0173 family.

In Methanopyrus kandleri (strain AV19 / DSM 6324 / JCM 9639 / NBRC 100938), this protein is UPF0173 metal-dependent hydrolase MK1542.